The sequence spans 276 residues: Type II pantothenate kinase (276 aa).

Asp-8–Lys-15 is a binding site for ATP. The active-site Proton acceptor is Glu-76. ATP is bound by residues Thr-105, Gly-127–Met-131, Phe-143, and Ser-230.

Belongs to the type II pantothenate kinase family. As to quaternary structure, homodimer.

It localises to the cytoplasm. The enzyme catalyses (R)-pantothenate + ATP = (R)-4'-phosphopantothenate + ADP + H(+). Its pathway is cofactor biosynthesis; coenzyme A biosynthesis; CoA from (R)-pantothenate: step 1/5. Its function is as follows. Catalyzes the phosphorylation of pantothenate (Pan), the first step in CoA biosynthesis. The sequence is that of Type II pantothenate kinase from Bacillus cereus (strain ZK / E33L).